Consider the following 252-residue polypeptide: Enolase-phosphatase E1 (252 aa).

Residues Asp14 and Glu16 each coordinate Mg(2+). Substrate is bound by residues 143 to 144 (SS) and Lys177. Asp202 lines the Mg(2+) pocket.

It belongs to the HAD-like hydrolase superfamily. MasA/MtnC family. In terms of assembly, monomer. It depends on Mg(2+) as a cofactor.

The protein resides in the cytoplasm. Its subcellular location is the nucleus. It catalyses the reaction 5-methylsulfanyl-2,3-dioxopentyl phosphate + H2O = 1,2-dihydroxy-5-(methylsulfanyl)pent-1-en-3-one + phosphate. Its pathway is amino-acid biosynthesis; L-methionine biosynthesis via salvage pathway; L-methionine from S-methyl-5-thio-alpha-D-ribose 1-phosphate: step 3/6. It functions in the pathway amino-acid biosynthesis; L-methionine biosynthesis via salvage pathway; L-methionine from S-methyl-5-thio-alpha-D-ribose 1-phosphate: step 4/6. Bifunctional enzyme that catalyzes the enolization of 2,3-diketo-5-methylthiopentyl-1-phosphate (DK-MTP-1-P) into the intermediate 2-hydroxy-3-keto-5-methylthiopentenyl-1-phosphate (HK-MTPenyl-1-P), which is then dephosphorylated to form the acireductone 1,2-dihydroxy-3-keto-5-methylthiopentene (DHK-MTPene). The sequence is that of Enolase-phosphatase E1 from Drosophila pseudoobscura pseudoobscura (Fruit fly).